We begin with the raw amino-acid sequence, 236 residues long: Ubiquinone biosynthesis O-methyltransferase (236 aa).

Residues Arg-39, Gly-59, Asp-80, and Met-124 each contribute to the S-adenosyl-L-methionine site.

Belongs to the methyltransferase superfamily. UbiG/COQ3 family.

The catalysed reaction is a 3-demethylubiquinol + S-adenosyl-L-methionine = a ubiquinol + S-adenosyl-L-homocysteine + H(+). It catalyses the reaction a 3-(all-trans-polyprenyl)benzene-1,2-diol + S-adenosyl-L-methionine = a 2-methoxy-6-(all-trans-polyprenyl)phenol + S-adenosyl-L-homocysteine + H(+). It functions in the pathway cofactor biosynthesis; ubiquinone biosynthesis. In terms of biological role, O-methyltransferase that catalyzes the 2 O-methylation steps in the ubiquinone biosynthetic pathway. The chain is Ubiquinone biosynthesis O-methyltransferase from Shewanella pealeana (strain ATCC 700345 / ANG-SQ1).